Consider the following 116-residue polypeptide: U16-barytoxin-Tl1c (116 aa).

A signal peptide spans 1–20 (MKTIIVFLSLLVLATKFGDA). Positions 21-76 (NEGVNQEQMKEVIQNEFREDFLNEMAPMSLLQQLEAIESTLLEKEADRNSRQKRCN) are excised as a propeptide. 3 disulfides stabilise this stretch: Cys-75–Cys-90, Cys-82–Cys-95, and Cys-89–Cys-110.

This sequence belongs to the neurotoxin 14 (magi-1) family. 06 (ICK-Trit) subfamily. Expressed by the venom gland.

It is found in the secreted. In terms of biological role, ion channel inhibitor. In Trittame loki (Brush-footed trapdoor spider), this protein is U16-barytoxin-Tl1c.